The following is a 603-amino-acid chain: MATITGSSMPTRTACFNYQGRSAESKLNLPQIHFNNNQAFPVLGLRSLNKLHVRTARATSGSSDTSEKSLGKIVCGMSLVFVGAEVGPWSKTGGLGDVLGGLPPVLAGNGHRVMTVSPRYDQYKDAWDTNVLVEVKVGDKIETVRFFHCYKRGVDRVFVDHPLFLERVWGKTGSKLYGPKTGIDYRDNQLRFSLLCQAALEAPRVLNLNSSKYFSGPYGEDVIFVANDWHSALIPCYLKSMYKSRGLYKNAKVAFCIHNIAYQGRNAFSDFSLLNLPDEFRSSFDFIDGYNKPCEGKKINWMKAGILESDQVFTVSPHYAKELISGEDRGVELDNIIRSTGIIGIVNGMDNREWSPQTDRYIDVHYNETTVTEAKPLLKGTLQAEIGLPVDSSIPLIGFIGRLEEQKGSDILVEAIAKFADENVQIVVLGTGKKIMEKQIEVLEEKYPGKAIGITKFNSPLAHKIIAGADFIVIPSRFEPCGLVQLHAMPYGTVPIVSSTGGLVDTVKEGYTGFHAGPFDVECEDVDPDDVDKLAATVKRALKTYGTQAMKQIILNCMAQNFSWKKPAKLWEKALLNLEVTGNVAGIDGDEIAPLAKENVATP.

The transit peptide at 1-75 (MATITGSSMP…SEKSLGKIVC (75 aa)) directs the protein to the chloroplast. Lys91 serves as a coordination point for ADP-alpha-D-glucose.

Belongs to the glycosyltransferase 1 family. Bacterial/plant glycogen synthase subfamily. Expressed in pods and leaves. No expression in flowers or stipules.

The protein resides in the plastid. It is found in the chloroplast. It localises to the amyloplast. The enzyme catalyses an NDP-alpha-D-glucose + [(1-&gt;4)-alpha-D-glucosyl](n) = [(1-&gt;4)-alpha-D-glucosyl](n+1) + a ribonucleoside 5'-diphosphate + H(+). Its pathway is glycan biosynthesis; starch biosynthesis. Functionally, may be responsible for the synthesis of amylose. The chain is Granule-bound starch synthase 1, chloroplastic/amyloplastic from Pisum sativum (Garden pea).